Here is a 279-residue protein sequence, read N- to C-terminus: DegV domain-containing protein M6_Spy1246 (279 aa).

Residues 4–278 form the DegV domain; that stretch reads IKIVTDSSIT…EGAFAVMVRY (275 aa). Hexadecanoate is bound by residues Thr62 and Ser95.

May bind long-chain fatty acids, such as palmitate, and may play a role in lipid transport or fatty acid metabolism. This Streptococcus pyogenes serotype M6 (strain ATCC BAA-946 / MGAS10394) protein is DegV domain-containing protein M6_Spy1246.